Consider the following 134-residue polypeptide: Prefoldin subunit 4 (134 aa).

An N-acetylalanine modification is found at alanine 2. Serine 125 carries the post-translational modification Phosphoserine.

This sequence belongs to the prefoldin subunit beta family. As to quaternary structure, heterohexamer of two PFD-alpha type and four PFD-beta type subunits. Interacts with URI1; the interaction is phosphorylation-dependent and occurs in a growth-dependent manner.

Its subcellular location is the nucleus. It is found in the cytoplasm. The protein resides in the mitochondrion. Functionally, binds specifically to cytosolic chaperonin (c-CPN) and transfers target proteins to it. Binds to nascent polypeptide chain and promotes folding in an environment in which there are many competing pathways for nonnative proteins. This chain is Prefoldin subunit 4 (PFDN4), found in Bos taurus (Bovine).